The chain runs to 349 residues: MMTAPKPSYSCACFYTDNIFIQEFHVHVRYTGEQQFRRDYERVLSSQGCRTSEQFRNVLETIKKEVERRRKLGEESLHRRREISLHYKPLYPEVYVLQESFLAAEFLTAVKYSKSPQANVEGLLHHLHSITDKRIYRLPVFIPEFCAKLVEELENFERSDLPKGRPNTMNNYGILLNELGFVDALTAPLCEKYIEPLTSLLFPDWGGGCLDSHRAFVVKYALQEDLDLSCHYDNAEVTLNVSLGKEFTDGNLYFSDMKEVPVNERTYAEVEHITGQGILHRGQHVHGALPISSGERWNLILWMRASDVRNKCCPMCDNEPVLVKTLGDGDGFTSVREDREQTVDICTLT.

Residues 211 to 305 enclose the Fe2OG dioxygenase domain; sequence DSHRAFVVKY…RWNLILWMRA (95 aa). Fe cation is bound by residues His-231, Asp-233, and His-286. Arg-296 is a 2-oxoglutarate binding site.

Belongs to the OGFOD2 family. It depends on Fe(2+) as a cofactor. Requires L-ascorbate as cofactor.

This chain is 2-oxoglutarate and iron-dependent oxygenase domain-containing protein 2 (ogfod2), found in Xenopus tropicalis (Western clawed frog).